A 549-amino-acid polypeptide reads, in one-letter code: Movement protein Hsp70h (549 aa).

The protein belongs to the heat shock protein 70 family.

It localises to the virion. Functionally, transports viral genome to neighboring plant cells directly through plasmosdesmata, without any budding. The movement protein allows efficient cell to cell propagation, by bypassing the host cell wall barrier. Two movement proteins, p6, Hsp70h and three structural proteins, CP, CPm, and P64 are essential for cell-cell movement. Also plays a role in virion formation. Together with CPm and p64, encapsidates the 5'-terminal portion of the viral genome. This Vitis vinifera (Grape) protein is Movement protein Hsp70h.